Consider the following 98-residue polypeptide: Feather keratin 1 (98 aa).

Belongs to the avian keratin family. As to quaternary structure, the avian keratins (F-ker, S-ker, C-ker and B-ker) are a complex mixture of very similar polypeptides.

The chain is Feather keratin 1 from Gallus gallus (Chicken).